The primary structure comprises 372 residues: Serine protease 44 (372 aa).

Positions 1–25 (MAFQGCDCFGLLVWLLLLQTRLGKA) are cleaved as a signal peptide. At 26–351 (RMVPGTPSLS…KELSRASCWK (326 aa)) the chain is on the extracellular side. Residues 31-72 (TPSLSPLPSENGLDDSGVNPQERPLTGMPETSLPRKPGDSTR) are disordered. In terms of domain architecture, Peptidase S1 spans 112–345 (IVGGRPAPAR…YRDWIIKELS (234 aa)). An intrachain disulfide couples Cys137 to Cys153. Residues His152 and Asp197 each act as charge relay system in the active site. N-linked (GlcNAc...) asparagine glycosylation is present at Asn208. 3 cysteine pairs are disulfide-bonded: Cys231-Cys303, Cys262-Cys283, and Cys293-Cys321. The active-site Charge relay system is the Ser297. Residues 352–372 (LSGFLVLSVCLVLHLAIVVAL) form a helical membrane-spanning segment.

It belongs to the peptidase S1 family. In terms of tissue distribution, testis-specific. Expressed by primary and secondary spermatocytes.

Its subcellular location is the membrane. The protein localises to the cytoplasm. Its function is as follows. Lacks protease activity in vitro. The polypeptide is Serine protease 44 (Mus musculus (Mouse)).